The primary structure comprises 72 residues: uncharacterized protein (72 aa).

Residues tyrosine 27–valine 55 are a coiled coil.

This is an uncharacterized protein from Schizosaccharomyces pombe (strain 972 / ATCC 24843) (Fission yeast).